The following is a 245-amino-acid chain: 1-(5-phosphoribosyl)-5-[(5-phosphoribosylamino)methylideneamino] imidazole-4-carboxamide isomerase (245 aa).

Aspartate 7 acts as the Proton acceptor in catalysis. Residue aspartate 129 is the Proton donor of the active site.

It belongs to the HisA/HisF family.

Its subcellular location is the cytoplasm. The enzyme catalyses 1-(5-phospho-beta-D-ribosyl)-5-[(5-phospho-beta-D-ribosylamino)methylideneamino]imidazole-4-carboxamide = 5-[(5-phospho-1-deoxy-D-ribulos-1-ylimino)methylamino]-1-(5-phospho-beta-D-ribosyl)imidazole-4-carboxamide. The protein operates within amino-acid biosynthesis; L-histidine biosynthesis; L-histidine from 5-phospho-alpha-D-ribose 1-diphosphate: step 4/9. In Pectobacterium carotovorum subsp. carotovorum (strain PC1), this protein is 1-(5-phosphoribosyl)-5-[(5-phosphoribosylamino)methylideneamino] imidazole-4-carboxamide isomerase.